The sequence spans 318 residues: NADH-ubiquinone oxidoreductase chain 1 (318 aa).

8 helical membrane passes run 2–22, 70–90, 100–120, 147–167, 171–191, 223–243, 253–273, and 294–314; these read FFINIISLIIPILLAVAFLTL, MFILAPILALSLALTMWIPLP, LGVLFMLAMSSLAVYSILWSG, AIILLSVLLMNGSFTLSTLII, HMWLIFPAWPLAMMWFISTLA, FFLAEYANIIMMNILTTILFF, ELYSINFTMKTLLLTICFLWI, and LPLTLALCMWHVALPIITASI.

Belongs to the complex I subunit 1 family. As to quaternary structure, core subunit of respiratory chain NADH dehydrogenase (Complex I) which is composed of 45 different subunits.

The protein localises to the mitochondrion inner membrane. The catalysed reaction is a ubiquinone + NADH + 5 H(+)(in) = a ubiquinol + NAD(+) + 4 H(+)(out). In terms of biological role, core subunit of the mitochondrial membrane respiratory chain NADH dehydrogenase (Complex I) which catalyzes electron transfer from NADH through the respiratory chain, using ubiquinone as an electron acceptor. Essential for the catalytic activity and assembly of complex I. The sequence is that of NADH-ubiquinone oxidoreductase chain 1 (MT-ND1) from Canis lupus familiaris (Dog).